The following is a 418-amino-acid chain: Phosphopentomutase (418 aa).

Residues D10, D297, H302, D338, H339, and H350 each contribute to the Mn(2+) site.

The protein belongs to the phosphopentomutase family. Mn(2+) is required as a cofactor.

It localises to the cytoplasm. The catalysed reaction is 2-deoxy-alpha-D-ribose 1-phosphate = 2-deoxy-D-ribose 5-phosphate. It carries out the reaction alpha-D-ribose 1-phosphate = D-ribose 5-phosphate. It functions in the pathway carbohydrate degradation; 2-deoxy-D-ribose 1-phosphate degradation; D-glyceraldehyde 3-phosphate and acetaldehyde from 2-deoxy-alpha-D-ribose 1-phosphate: step 1/2. In terms of biological role, isomerase that catalyzes the conversion of deoxy-ribose 1-phosphate (dRib-1-P) and ribose 1-phosphate (Rib-1-P) to deoxy-ribose 5-phosphate (dRib-5-P) and ribose 5-phosphate (Rib-5-P), respectively. The chain is Phosphopentomutase from Chromohalobacter salexigens (strain ATCC BAA-138 / DSM 3043 / CIP 106854 / NCIMB 13768 / 1H11).